A 457-amino-acid polypeptide reads, in one-letter code: Cysteine--tRNA ligase (457 aa).

Cys29 serves as a coordination point for Zn(2+). The 'HIGH' region signature appears at 31-41; the sequence is PTVYDNPHIGN. Residues Cys214, His239, and Glu243 each contribute to the Zn(2+) site. The 'KMSKS' region motif lies at 272–276; it reads KMSKS. Lys275 is a binding site for ATP.

This sequence belongs to the class-I aminoacyl-tRNA synthetase family. Monomer. Zn(2+) is required as a cofactor.

Its subcellular location is the cytoplasm. The enzyme catalyses tRNA(Cys) + L-cysteine + ATP = L-cysteinyl-tRNA(Cys) + AMP + diphosphate. The polypeptide is Cysteine--tRNA ligase (cysS) (Rickettsia prowazekii (strain Madrid E)).